Reading from the N-terminus, the 151-residue chain is MSTSARRRLMRDFKRMQTDPPAGVSASPVADNVMTWNAVIIGPADTPFEDGTFRLVMHFEEQYPNKPPGVKFISQMFHPNVYGTGELCLDILQNRWSPTYDVAAILTSIQSLLNDPNTSSPANVEASNLYKDNRKEYIKRVRETVEKSWED.

Positions 1-26 (MSTSARRRLMRDFKRMQTDPPAGVSA) are disordered. A UBC core domain is found at 4 to 150 (SARRRLMRDF…VRETVEKSWE (147 aa)). The Glycyl thioester intermediate role is filled by cysteine 88.

It belongs to the ubiquitin-conjugating enzyme family.

Its subcellular location is the cytoplasm. The protein localises to the nucleus. The enzyme catalyses S-ubiquitinyl-[E1 ubiquitin-activating enzyme]-L-cysteine + [E2 ubiquitin-conjugating enzyme]-L-cysteine = [E1 ubiquitin-activating enzyme]-L-cysteine + S-ubiquitinyl-[E2 ubiquitin-conjugating enzyme]-L-cysteine.. The protein operates within protein modification; protein ubiquitination. In terms of biological role, catalyzes the covalent attachment of ubiquitin to other proteins. Plays a role in transcription regulation by catalyzing the monoubiquitination of histone H2B to form H2BK123ub1. H2BK123ub1 gives a specific tag for epigenetic transcriptional activation and is also a prerequisite for H3K4me and H3K79me formation. Also involved in postreplication repair of UV-damaged DNA, in N-end rule-dependent protein degradation and in sporulation. This chain is Ubiquitin-conjugating enzyme E2 2 (ubc2), found in Aspergillus fumigatus (strain ATCC MYA-4609 / CBS 101355 / FGSC A1100 / Af293) (Neosartorya fumigata).